The sequence spans 103 residues: Putative truncated guanine nucleotide exchange factor YLL017W (103 aa).

The 72-residue stretch at 26–97 folds into the SH3 domain; that stretch reads QPIDVVECTY…PPSFYTVHSK (72 aa).

The sequence is that of Putative truncated guanine nucleotide exchange factor YLL017W from Saccharomyces cerevisiae (strain ATCC 204508 / S288c) (Baker's yeast).